The chain runs to 632 residues: Extracellular metalloproteinase 1 (632 aa).

Positions M1–A19 are cleaved as a signal peptide. The propeptide occupies H20 to H243. N-linked (GlcNAc...) asparagine glycosylation is present at N284. Zn(2+) is bound at residue H427. The active site involves E428. Zn(2+) is bound at residue H431. 2 N-linked (GlcNAc...) asparagine glycosylation sites follow: N591 and N620.

The protein belongs to the peptidase M36 family. Zn(2+) is required as a cofactor.

The protein resides in the secreted. Secreted metalloproteinase that allows assimilation of proteinaceous substrates and probably acts as a virulence factor. The polypeptide is Extracellular metalloproteinase 1 (MEP1) (Arthroderma gypseum (strain ATCC MYA-4604 / CBS 118893) (Microsporum gypseum)).